The sequence spans 665 residues: SH3 domain-containing kinase-binding protein 1 (665 aa).

SH3 domains follow at residues Met-1–Lys-58 and Arg-98–Gly-157. A phosphoserine mark is found at Ser-156, Ser-159, Ser-183, and Ser-230. Residues Ser-159–Val-200 form a disordered region. Over residues Glu-177–Gly-195 the composition is skewed to low complexity. Thr-254 carries the phosphothreonine modification. Positions Lys-267–Pro-328 constitute an SH3 3 domain. Disordered regions lie at residues Pro-328–Ser-444 and Asp-467–Glu-610. Positions Thr-355–Leu-390 are enriched in basic and acidic residues. A Phosphoserine modification is found at Ser-436. The segment covering Val-469–Pro-484 has biased composition (polar residues). The span at Pro-491–Pro-510 shows a compositional bias: low complexity. Phosphoserine is present on residues Ser-509, Ser-511, and Ser-521. Residues Glu-517 to Lys-531 show a composition bias toward basic and acidic residues. Residues Lys-535–Lys-546 are compositionally biased toward polar residues. A compositionally biased stretch (low complexity) spans Ala-564–Gly-582. Position 587 is a phosphoserine (Ser-587). A coiled-coil region spans residues Ala-602 to Ser-664.

Can self-associate and form homotetramers. Interacts with CD2, F-actin capping protein, PIK3R3, GRB2, EGFR, MET, BLNK, MAP3K4, PDCD6IP, SPRY2, ARHGAP17, ARHGAP27, MAGI2, CRK, BCAR1, SOS1, ASAP1, ARAP3, HIP1R, SYNJ2, INPP5D and STAP1. Interacts with E3 ubiquitin-protein ligases CBL and CBLB, but does not interact with CBLC. Two molecules of SH3KBP1 seem to bind through their respective SH3 1 domain to one molecule of CBLB. The interaction with CBL or CBLB and EGFR is increased upon EGF stimulation. The interaction with CBL is attenuated by PDCD6IP. Interacts (via SH3 domains) with ARAP1. The interaction is independent of EGF and does not affect ARAP1 GTPase-activating activity but is involved in regulating ubiquitination and endocytic trafficking of EGFR. ARAP1 competes with CBL for binding to SH3KBP1 and prevents interaction of CBL with SH3KBP1; this is likely to regulate SH3KBP1-mediated internalization of EGFR. Interacts through its proline-rich region with the SH3 domain of endophilins SH3GL1, SH3GL2 and SH3GL3. The SH3KBP1-endophilin complex seems to associate with a complex containing the phosphorylated receptor (EGFR or MET) and phosphorylated CBL. Probably associates with ASAP1 and phosphorylated EGFR. Probably part of a complex consisting of at least SH3KBP1, ASAP1 and ARAP3. Interacts with focal adhesion kinases PTK2/FAK1 and PTK2B/PYK2, probably as a dimer. Interacts with DAB2 and probably associates with chathrin through its interaction with DAB2. Part of a complex consisting of SH3KBP1, DAB2, and clathrin heavy chain. DAB2 and clathrin dissociate from SH3KBP1 following growth factor treatment, enabling interaction with CBL. Interacts with DDN and probably associates with MAGI2 through its interaction with DDN. Interacts with the SH3 domains of SRC tyrosine-protein kinases SRC, LCK, LYN, FGR, FYN and HCK. Interacts with TRADD, BIRC2, TRAF1, TRAF2 and TNFR1, and the association with a TNFR1-associated complex upon stimulation with TNF-alpha seems to be mediated by SRC. Interacts (via SH3 domains) with SHKBP1 (via PXXXPR motifs). Interaction with CBL is abolished in the presence of SHKBP1. Interacts (via SH3 domains) with ZFP36 (via extreme C-terminal region). Interacts with MAP3K4; this interaction enhances the association with ZFP36. In terms of assembly, (Microbial infection) Interacts (via SH3 domains) with Chikungunya virus non-structural protein 3 (via C-terminus); this interaction plays a role in initiation of viral replication. Post-translationally, monoubiquitinated by CBL and CBLB after EGF stimulation; probably on its C-terminus. As to expression, ubiquitously expressed. Also expressed in some cancer cell lines.

Its subcellular location is the cytoplasm. The protein resides in the cytoskeleton. The protein localises to the cytoplasmic vesicle membrane. It is found in the synapse. It localises to the synaptosome. Its subcellular location is the cell junction. The protein resides in the focal adhesion. Adapter protein involved in regulating diverse signal transduction pathways. Involved in the regulation of endocytosis and lysosomal degradation of ligand-induced receptor tyrosine kinases, including EGFR and MET/hepatocyte growth factor receptor, through an association with CBL and endophilins. The association with CBL, and thus the receptor internalization, may be inhibited by an interaction with PDCD6IP and/or SPRY2. Involved in regulation of ligand-dependent endocytosis of the IgE receptor. Attenuates phosphatidylinositol 3-kinase activity by interaction with its regulatory subunit. May be involved in regulation of cell adhesion; promotes the interaction between TTK2B and PDCD6IP. May be involved in the regulation of cellular stress response via the MAPK pathways through its interaction with MAP3K4. Is involved in modulation of tumor necrosis factor mediated apoptosis. Plays a role in the regulation of cell morphology and cytoskeletal organization. Required in the control of cell shape and migration. Has an essential role in the stimulation of B cell activation. The protein is SH3 domain-containing kinase-binding protein 1 (SH3KBP1) of Homo sapiens (Human).